A 162-amino-acid chain; its full sequence is NADH-quinone oxidoreductase subunit I (162 aa).

4Fe-4S ferredoxin-type domains lie at 54-83 and 93-122; these read RRYE…INST and SSYE…ETNI. Cys-63, Cys-66, Cys-69, Cys-73, Cys-102, Cys-105, Cys-108, and Cys-112 together coordinate [4Fe-4S] cluster.

This sequence belongs to the complex I 23 kDa subunit family. NDH-1 is composed of 14 different subunits. Subunits NuoA, H, J, K, L, M, N constitute the membrane sector of the complex. It depends on [4Fe-4S] cluster as a cofactor.

The protein localises to the cell inner membrane. The catalysed reaction is a quinone + NADH + 5 H(+)(in) = a quinol + NAD(+) + 4 H(+)(out). NDH-1 shuttles electrons from NADH, via FMN and iron-sulfur (Fe-S) centers, to quinones in the respiratory chain. The immediate electron acceptor for the enzyme in this species is believed to be ubiquinone. Couples the redox reaction to proton translocation (for every two electrons transferred, four hydrogen ions are translocated across the cytoplasmic membrane), and thus conserves the redox energy in a proton gradient. This is NADH-quinone oxidoreductase subunit I from Francisella tularensis subsp. holarctica (strain FTNF002-00 / FTA).